A 240-amino-acid polypeptide reads, in one-letter code: MTNMSRVERRKAQNLYEDQNAALADDYVDDGESLPTRQSVKNQREQKKKQGKTKTPLFTVLAVIFVFVPVIVLVTLFYLKSHPDNHDDYEDVFIDSSQSKYEVVPKSEDKNDTADTKETALQKESKKEPEDSKPKEQTAADKKQTAVAEKEDSPNKEEATAAAASSSQSTVQQQEQPAEPVQNVPNRVVKHTVQKKETLYRISMKYYKSRTGEEKIRAYNHLNGNDVYTGQVLDIPLMDE.

The tract at residues 26-52 (DYVDDGESLPTRQSVKNQREQKKKQGK) is disordered. A helical membrane pass occupies residues 57-77 (LFTVLAVIFVFVPVIVLVTLF). Residues 100–185 (KYEVVPKSED…QPAEPVQNVP (86 aa)) form a disordered region. Positions 103 to 159 (VVPKSEDKNDTADTKETALQKESKKEPEDSKPKEQTAADKKQTAVAEKEDSPNKEEA) are enriched in basic and acidic residues. Over residues 160–185 (TAAAASSSQSTVQQQEQPAEPVQNVP) the composition is skewed to low complexity. The 47-residue stretch at 189-235 (VKHTVQKKETLYRISMKYYKSRTGEEKIRAYNHLNGNDVYTGQVLDI) folds into the LysM domain.

It localises to the membrane. This is an uncharacterized protein from Bacillus subtilis (strain 168).